The chain runs to 156 residues: Small ribosomal subunit protein uS7 (156 aa).

The protein belongs to the universal ribosomal protein uS7 family. Part of the 30S ribosomal subunit. Contacts proteins S9 and S11.

Functionally, one of the primary rRNA binding proteins, it binds directly to 16S rRNA where it nucleates assembly of the head domain of the 30S subunit. Is located at the subunit interface close to the decoding center, probably blocks exit of the E-site tRNA. The polypeptide is Small ribosomal subunit protein uS7 (Cutibacterium acnes (strain DSM 16379 / KPA171202) (Propionibacterium acnes)).